Reading from the N-terminus, the 226-residue chain is Ribosomal RNA large subunit methyltransferase E (226 aa).

Positions 82, 84, 100, 116, and 140 each coordinate S-adenosyl-L-methionine. Lys180 serves as the catalytic Proton acceptor.

This sequence belongs to the class I-like SAM-binding methyltransferase superfamily. RNA methyltransferase RlmE family.

The protein localises to the cytoplasm. It carries out the reaction uridine(2552) in 23S rRNA + S-adenosyl-L-methionine = 2'-O-methyluridine(2552) in 23S rRNA + S-adenosyl-L-homocysteine + H(+). Specifically methylates the uridine in position 2552 of 23S rRNA at the 2'-O position of the ribose in the fully assembled 50S ribosomal subunit. In Caulobacter sp. (strain K31), this protein is Ribosomal RNA large subunit methyltransferase E.